Here is a 528-residue protein sequence, read N- to C-terminus: MFRQSKRRIASRKNFSSYDDIVKSELDVGNTNAANQIILSSSSSEEEKKLYARLYESKLSFYDLPPQGEITLEQFEIWAIDRLKILLEIESCLSRNKSIKEIETIIKPQFQKLLPFNTESLEDRKKDYYSHFILRLCFCRSKELREKFVRAETFLFKIRFNMLTSTDQTKFVQSLDLPLLQFISNEEKAELSHQLYQTVSASLQFQLNLNEEHQRKQYFQQEKFIKLPFENVIELVGNRLVFLKDGYAYLPQFQQLNLLSNEFASKLNQELIKTYQYLPRLNEDDRLLPILNHLSSGYTIADFNQQKANQFSENVDDEINAQSVWSEEISSNYPLCIKNLMEGLKKNHHLRYYGRQQLSLFLKGIGLSADEALKFWSEAFTRNGNMTMEKFNKEYRYSFRHNYGLEGNRINYKPWDCHTILSKPRPGRGDYHGCPFRDWSHERLSAELRSMKLTQAQIISVLDSCQKGEYTIACTKVFEMTHNSASADLEIGEQTHIAHPNLYFERSRQLQKKQQKLEKEKLFNNGNH.

Residues 210-239 (NEEHQRKQYFQQEKFIKLPFENVIELVGNR) are H-T-H-like motif. [4Fe-4S] cluster-binding residues include Cys336, Cys417, Cys434, and Cys474.

Belongs to the eukaryotic-type primase large subunit family. In terms of assembly, DNA polymerase alpha:primase is a four subunit enzyme complex, which is assembled throughout the cell cycle, and consists of the two DNA polymerase subunits A POL1 and B POL12, and the DNA primase large PRI2 and small PRI1 subunits. Interacts with MCM10. [4Fe-4S] cluster serves as cofactor.

Its function is as follows. DNA primase is the polymerase that synthesizes small RNA primers for the Okazaki fragments made during discontinuous DNA replication. In a complex with DNA polymerase alpha (DNA polymerase alpha:primase) constitutes a replicative polymerase. Both primase components participate in formation of the active center, but the ATP-binding site is exclusively located on p48. The protein is DNA primase large subunit (PRI2) of Saccharomyces cerevisiae (strain ATCC 204508 / S288c) (Baker's yeast).